A 700-amino-acid chain; its full sequence is Elongation factor G (700 aa).

One can recognise a tr-type G domain in the interval 10–286; that stretch reads TKVRNIGIMA…AVVDYLPSPL (277 aa). GTP contacts are provided by residues 19-26, 83-87, and 137-140; these read AHIDAGKT, DTPGH, and NKMD.

The protein belongs to the TRAFAC class translation factor GTPase superfamily. Classic translation factor GTPase family. EF-G/EF-2 subfamily.

Its subcellular location is the cytoplasm. Catalyzes the GTP-dependent ribosomal translocation step during translation elongation. During this step, the ribosome changes from the pre-translocational (PRE) to the post-translocational (POST) state as the newly formed A-site-bound peptidyl-tRNA and P-site-bound deacylated tRNA move to the P and E sites, respectively. Catalyzes the coordinated movement of the two tRNA molecules, the mRNA and conformational changes in the ribosome. This is Elongation factor G from Saccharopolyspora erythraea (strain ATCC 11635 / DSM 40517 / JCM 4748 / NBRC 13426 / NCIMB 8594 / NRRL 2338).